A 158-amino-acid polypeptide reads, in one-letter code: Snaclec stejaggregin-A subunit alpha (158 aa).

The signal sequence occupies residues 1-23; that stretch reads MGRFISVSFGLLVVFLSLSGTGA. 3 cysteine pairs are disulfide-bonded: Cys27–Cys38, Cys55–Cys152, and Cys127–Cys144. In terms of domain architecture, C-type lectin spans 34–153; sequence YDWYCYKPFN…CQAKNPFVCK (120 aa).

The protein belongs to the snaclec family. In terms of assembly, heteromultimer; disulfide-linked. Expressed by the venom gland.

It localises to the secreted. In terms of biological role, interferes with one step of hemostasis (modulation of platelet aggregation, or coagulation cascade, for example). In Trimeresurus stejnegeri (Chinese green tree viper), this protein is Snaclec stejaggregin-A subunit alpha.